A 450-amino-acid polypeptide reads, in one-letter code: tRNA modification GTPase MnmE (450 aa).

(6S)-5-formyl-5,6,7,8-tetrahydrofolate contacts are provided by Lys-21, Glu-78, and Lys-117. The TrmE-type G domain occupies 213–376 (GHALSIIGKP…LSQKISAFFP (164 aa)). K(+) is bound at residue Asn-223. Residues 223 to 228 (NAGKSS), 242 to 248 (SDIKGTT), and 267 to 270 (DTAG) contribute to the GTP site. Position 227 (Ser-227) interacts with Mg(2+). K(+) contacts are provided by Ser-242, Ile-244, and Thr-247. Thr-248 contributes to the Mg(2+) binding site. (6S)-5-formyl-5,6,7,8-tetrahydrofolate is bound at residue Lys-450.

It belongs to the TRAFAC class TrmE-Era-EngA-EngB-Septin-like GTPase superfamily. TrmE GTPase family. Homodimer. Heterotetramer of two MnmE and two MnmG subunits. It depends on K(+) as a cofactor.

The protein resides in the cytoplasm. In terms of biological role, exhibits a very high intrinsic GTPase hydrolysis rate. Involved in the addition of a carboxymethylaminomethyl (cmnm) group at the wobble position (U34) of certain tRNAs, forming tRNA-cmnm(5)s(2)U34. The polypeptide is tRNA modification GTPase MnmE (Helicobacter acinonychis (strain Sheeba)).